The following is a 180-amino-acid chain: Dynactin subunit 6 (180 aa).

The protein belongs to the dynactin subunits 5/6 family. Dynactin subunit 6 subfamily. Subunit of dynactin, a multiprotein complex part of a tripartite complex with dynein and a adapter, such as BICDL1, BICD2 or HOOK3. The dynactin complex is built around ACTR1A/ACTB filament and consists of an actin-related filament composed of a shoulder domain, a pointed end and a barbed end.

Its subcellular location is the cytoplasm. The protein localises to the cytoskeleton. Its function is as follows. Part of the dynactin complex that activates the molecular motor dynein for ultra-processive transport along microtubules. In Caenorhabditis elegans, this protein is Dynactin subunit 6 (dnc-6).